We begin with the raw amino-acid sequence, 541 residues long: uncharacterized protein (541 aa).

A signal peptide (tat-type signal) is located at residues 1–55; it reads MTKTVTRAGGASGPQQFQSGGETMKYEITRRRFLAASSAVLAAPAIVTMVRPARA. The tract at residues 339 to 362 is disordered; the sequence is RRSPSGISSPRSNRQPKAEALSAR. A compositionally biased stretch (low complexity) spans 341-351; that stretch reads SPSGISSPRSN. The next 4 membrane-spanning stretches (helical) occupy residues 379–399, 420–440, 466–486, and 500–520; these read AIVWFARQVVIFSGIALMVFM, LPVLIFPWFILGGIVLAAHSG, LVSAGAFLMLGYQAYLVGEIA, and VGYFALAVGSVLVAIVTLAVA.

It belongs to the bacterial solute-binding protein 7 family. Post-translationally, predicted to be exported by the Tat system. The position of the signal peptide cleavage has not been experimentally proven.

It localises to the cell membrane. This is an uncharacterized protein from Sinorhizobium fredii (strain NBRC 101917 / NGR234).